The primary structure comprises 335 residues: Nucleotide-binding protein CYA_0911 (335 aa).

Residue 20-27 (GLTGSGKT) coordinates ATP. The interval 306–335 (ARFGPPPPAAGVEQQQVRIPLAGVPAPPHD) is disordered.

It belongs to the RapZ-like family.

Displays ATPase and GTPase activities. The protein is Nucleotide-binding protein CYA_0911 of Synechococcus sp. (strain JA-3-3Ab) (Cyanobacteria bacterium Yellowstone A-Prime).